Consider the following 419-residue polypeptide: DNA ligase (419 aa).

The NTD stretch occupies residues 1 to 120 (MLNHFPGHCS…ARQKRGAHTN (120 aa)). Residues 121 to 317 (RGMIPPMLVK…NYHSAHLAKL (197 aa)) are AD domain. Lysine 151 serves as the catalytic N6-AMP-lysine intermediate. ATP contacts are provided by lysine 151, glutamate 203, and phenylalanine 232. Glutamate 203 contacts a divalent metal cation. Position 291 (glutamate 291) interacts with a divalent metal cation. Residues isoleucine 294 and lysine 316 each coordinate ATP. Residues 318–419 (KPLLDAEFIL…REPINVLEII (102 aa)) form an OB domain region.

The protein belongs to the ATP-dependent DNA ligase family.

It is found in the virion. The enzyme catalyses ATP + (deoxyribonucleotide)n-3'-hydroxyl + 5'-phospho-(deoxyribonucleotide)m = (deoxyribonucleotide)n+m + AMP + diphosphate.. Functionally, very low-fidelity DNA ligase that seals nicks in double-stranded DNA during DNA repair. Together with the viral repair DNA polymerase X, fills the single nucleotide gaps generated by the AP endonuclease. It is not essential for viral replication and recombination. Displays a very low adenylation activity towards DNA with 3'-dideoxy- or 3'-amino-terminated nicks compared to regular nick DNA. The chain is DNA ligase from African swine fever virus (isolate Tick/South Africa/Pretoriuskop Pr4/1996) (ASFV).